Consider the following 131-residue polypeptide: Sec-independent protein translocase protein TatB (131 aa).

The chain crosses the membrane as a helical span at residues 2 to 22 (FDGIGFMELLLIGIVGLVVLG). The span at 86 to 95 (LKEAAQSVNR) shows a compositional bias: polar residues. Residues 86–131 (LKEAAQSVNRPYQVEDVPAAKDVPAKEMPTSETSTATNANSDKPNG) form a disordered region. Residues 115 to 131 (TSETSTATNANSDKPNG) are compositionally biased toward low complexity.

This sequence belongs to the TatB family. The Tat system comprises two distinct complexes: a TatABC complex, containing multiple copies of TatA, TatB and TatC subunits, and a separate TatA complex, containing only TatA subunits. Substrates initially bind to the TatABC complex, which probably triggers association of the separate TatA complex to form the active translocon.

Its subcellular location is the cell inner membrane. Its function is as follows. Part of the twin-arginine translocation (Tat) system that transports large folded proteins containing a characteristic twin-arginine motif in their signal peptide across membranes. Together with TatC, TatB is part of a receptor directly interacting with Tat signal peptides. TatB may form an oligomeric binding site that transiently accommodates folded Tat precursor proteins before their translocation. This chain is Sec-independent protein translocase protein TatB, found in Shewanella halifaxensis (strain HAW-EB4).